Here is a 443-residue protein sequence, read N- to C-terminus: Phosphoglucosamine mutase (443 aa).

Catalysis depends on serine 102, which acts as the Phosphoserine intermediate. Mg(2+) contacts are provided by serine 102, aspartate 241, aspartate 243, and aspartate 245. The residue at position 102 (serine 102) is a Phosphoserine.

This sequence belongs to the phosphohexose mutase family. Requires Mg(2+) as cofactor. Activated by phosphorylation.

It carries out the reaction alpha-D-glucosamine 1-phosphate = D-glucosamine 6-phosphate. Functionally, catalyzes the conversion of glucosamine-6-phosphate to glucosamine-1-phosphate. This Albidiferax ferrireducens (strain ATCC BAA-621 / DSM 15236 / T118) (Rhodoferax ferrireducens) protein is Phosphoglucosamine mutase.